Consider the following 357-residue polypeptide: 3-isopropylmalate dehydrogenase (357 aa).

75–88 is a binding site for NAD(+); sequence GPKWDTLPPAERPE. The substrate site is built by R96, R106, R134, and D222. Residues D222, D246, and D250 each coordinate Mg(2+). 279–291 provides a ligand contact to NAD(+); the sequence is GSAPDIAGQQKAN.

This sequence belongs to the isocitrate and isopropylmalate dehydrogenases family. LeuB type 1 subfamily. As to quaternary structure, homodimer. The cofactor is Mg(2+). Requires Mn(2+) as cofactor.

It localises to the cytoplasm. The catalysed reaction is (2R,3S)-3-isopropylmalate + NAD(+) = 4-methyl-2-oxopentanoate + CO2 + NADH. It participates in amino-acid biosynthesis; L-leucine biosynthesis; L-leucine from 3-methyl-2-oxobutanoate: step 3/4. Its function is as follows. Catalyzes the oxidation of 3-carboxy-2-hydroxy-4-methylpentanoate (3-isopropylmalate) to 3-carboxy-4-methyl-2-oxopentanoate. The product decarboxylates to 4-methyl-2 oxopentanoate. The polypeptide is 3-isopropylmalate dehydrogenase (Moorella thermoacetica (strain ATCC 39073 / JCM 9320)).